We begin with the raw amino-acid sequence, 433 residues long: Protein translocase subunit SecY (433 aa).

10 helical membrane-spanning segments follow: residues 17 to 37 (IIFT…PIAG), 71 to 91 (IFAL…LMSV), 117 to 137 (LTVL…ESIV), 141 to 161 (GPVV…TLVV), 184 to 204 (LIIF…MFEL), 212 to 232 (PLVA…IIFF), 268 to 288 (GVIP…LANF), 309 to 329 (IYIL…TAIV), 366 to 386 (LTVV…LLMN), and 388 to 408 (YVIS…VVLD).

Belongs to the SecY/SEC61-alpha family. Component of the Sec protein translocase complex. Heterotrimer consisting of SecY, SecE and SecG subunits. The heterotrimers can form oligomers, although 1 heterotrimer is thought to be able to translocate proteins. Interacts with the ribosome. Interacts with SecDF, and other proteins may be involved. Interacts with SecA.

Its subcellular location is the cell inner membrane. In terms of biological role, the central subunit of the protein translocation channel SecYEG. Consists of two halves formed by TMs 1-5 and 6-10. These two domains form a lateral gate at the front which open onto the bilayer between TMs 2 and 7, and are clamped together by SecE at the back. The channel is closed by both a pore ring composed of hydrophobic SecY resides and a short helix (helix 2A) on the extracellular side of the membrane which forms a plug. The plug probably moves laterally to allow the channel to open. The ring and the pore may move independently. This is Protein translocase subunit SecY from Rickettsia bellii (strain RML369-C).